A 573-amino-acid chain; its full sequence is Phosphomethylpyrimidine synthase (573 aa).

Substrate-binding positions include Asn190, Met219, Tyr248, His284, 304 to 306 (SRG), 345 to 348 (DGLR), and Glu384. His388 contacts Zn(2+). Substrate is bound at residue Tyr411. His452 is a Zn(2+) binding site. Residues Cys532, Cys535, and Cys540 each contribute to the [4Fe-4S] cluster site.

It belongs to the ThiC family. [4Fe-4S] cluster is required as a cofactor.

The catalysed reaction is 5-amino-1-(5-phospho-beta-D-ribosyl)imidazole + S-adenosyl-L-methionine = 4-amino-2-methyl-5-(phosphooxymethyl)pyrimidine + CO + 5'-deoxyadenosine + formate + L-methionine + 3 H(+). The protein operates within cofactor biosynthesis; thiamine diphosphate biosynthesis. In terms of biological role, catalyzes the synthesis of the hydroxymethylpyrimidine phosphate (HMP-P) moiety of thiamine from aminoimidazole ribotide (AIR) in a radical S-adenosyl-L-methionine (SAM)-dependent reaction. The protein is Phosphomethylpyrimidine synthase of Geobacillus sp. (strain WCH70).